The sequence spans 235 residues: Glycerol-3-phosphate acyltransferase (235 aa).

6 helical membrane-spanning segments follow: residues 2-22 (FTLI…TSII), 56-76 (TVTI…VVFF), 94-114 (LIAG…GFKG), 126-146 (FGIA…VVFL), 152-172 (VASI…KYLF), and 190-210 (FIHD…AAAI).

Belongs to the PlsY family. Probably interacts with PlsX.

It is found in the cell inner membrane. The catalysed reaction is an acyl phosphate + sn-glycerol 3-phosphate = a 1-acyl-sn-glycero-3-phosphate + phosphate. It participates in lipid metabolism; phospholipid metabolism. Functionally, catalyzes the transfer of an acyl group from acyl-phosphate (acyl-PO(4)) to glycerol-3-phosphate (G3P) to form lysophosphatidic acid (LPA). This enzyme utilizes acyl-phosphate as fatty acyl donor, but not acyl-CoA or acyl-ACP. In Chlorobium phaeobacteroides (strain BS1), this protein is Glycerol-3-phosphate acyltransferase.